The chain runs to 318 residues: Quinolinate synthase (318 aa).

The iminosuccinate site is built by histidine 34 and serine 51. Position 96 (cysteine 96) interacts with [4Fe-4S] cluster. Iminosuccinate is bound by residues 122 to 124 and serine 139; that span reads YIN. Cysteine 182 is a binding site for [4Fe-4S] cluster. Iminosuccinate-binding positions include 208 to 210 and threonine 225; that span reads HPE. Residue cysteine 275 participates in [4Fe-4S] cluster binding.

It belongs to the quinolinate synthase family. Type 2 subfamily. Requires [4Fe-4S] cluster as cofactor.

The protein localises to the cytoplasm. It carries out the reaction iminosuccinate + dihydroxyacetone phosphate = quinolinate + phosphate + 2 H2O + H(+). It functions in the pathway cofactor biosynthesis; NAD(+) biosynthesis; quinolinate from iminoaspartate: step 1/1. In terms of biological role, catalyzes the condensation of iminoaspartate with dihydroxyacetone phosphate to form quinolinate. This Synechocystis sp. (strain ATCC 27184 / PCC 6803 / Kazusa) protein is Quinolinate synthase.